Consider the following 276-residue polypeptide: Urease accessory protein UreD (276 aa).

Belongs to the UreD family. In terms of assembly, ureD, UreF and UreG form a complex that acts as a GTP-hydrolysis-dependent molecular chaperone, activating the urease apoprotein by helping to assemble the nickel containing metallocenter of UreC. The UreE protein probably delivers the nickel.

It localises to the cytoplasm. Required for maturation of urease via the functional incorporation of the urease nickel metallocenter. In Polaromonas naphthalenivorans (strain CJ2), this protein is Urease accessory protein UreD.